The following is a 505-amino-acid chain: MAKQKKQPRPKAETPKGFRDYFGAEVVERQTMLRKIGEVYHRYGFDPLETSAVETVEALGKFLPDVDRPNEGVFAFQEDGGSDDGKWLALRYDMTAPLARVAAQFRERPLPGQEDSLPSPYRRYTMGPVWRNEKPGPGRFRQFYQCDADTVGAPSVAADAEICAMLADCLEAVGIERGDYVVRVNNRKVLNGVMEVAGLAGDDKEAARGIVLRAIDKMDRLGAGGVRDLLGDGRKDESGDFTKGAGISSANADKILAFVQATAGDNAATVSNLKSLTEGSDIGTQGVSELEQIASLLAAQGYGPDRIIIDPSVVRGLGYYTGPVYEAELTFDVQNEKGQTVQFGSVAGGGRYDDLVKRFTGQEVPATGVSIGVDRLLAALHATGKLKGEDAGPVIVTVMDRDRMAEYQAMVATLRNAGIRAEVYLGNPKNFGNQLKYADKRRSPVAIIQGSDEAARGVVQLKDLILGAKLAEDATLEEWKSQPAQTEVAVADLVAEVQAIIARHK.

This sequence belongs to the class-II aminoacyl-tRNA synthetase family. In terms of assembly, homodimer.

Its subcellular location is the cytoplasm. It carries out the reaction tRNA(His) + L-histidine + ATP = L-histidyl-tRNA(His) + AMP + diphosphate + H(+). This Jannaschia sp. (strain CCS1) protein is Histidine--tRNA ligase.